The primary structure comprises 393 residues: Putative N(4)-(beta-N-acetylglucosaminyl)-L-asparaginase CG1827 (393 aa).

Positions 1-23 (MRRHLRASLWILCLATMAFSILA) are cleaved as a signal peptide. N-linked (GlcNAc...) asparagine glycans are attached at residues asparagine 49 and asparagine 64. Disulfide bonds link cysteine 97–cysteine 102 and cysteine 196–cysteine 212. Threonine 243 acts as the Nucleophile in catalysis. Residues 271-274 (RVGD) and 294-297 (TGDG) each bind substrate. Cysteines 354 and 381 form a disulfide.

It belongs to the Ntn-hydrolase family. Heterotetramer of two alpha and two beta chains arranged as a dimer of alpha/beta heterodimers. In terms of processing, cleaved into an alpha and beta chain by autocatalysis; this activates the enzyme. The N-terminal residue of the beta subunit is responsible for the nucleophile hydrolase activity.

The enzyme catalyses N(4)-(beta-N-acetyl-D-glucosaminyl)-L-asparagine + H2O = N-acetyl-beta-D-glucosaminylamine + L-aspartate + H(+). In terms of biological role, cleaves the GlcNAc-Asn bond which joins oligosaccharides to the peptide of asparagine-linked glycoproteins. The sequence is that of Putative N(4)-(beta-N-acetylglucosaminyl)-L-asparaginase CG1827 from Drosophila melanogaster (Fruit fly).